Here is a 122-residue protein sequence, read N- to C-terminus: Large ribosomal subunit protein uL14c (122 aa).

This sequence belongs to the universal ribosomal protein uL14 family. In terms of assembly, part of the 50S ribosomal subunit.

It localises to the plastid. It is found in the chloroplast. In terms of biological role, binds to 23S rRNA. The sequence is that of Large ribosomal subunit protein uL14c from Panax ginseng (Korean ginseng).